The chain runs to 166 residues: Lipoprotein signal peptidase (166 aa).

The next 4 helical transmembrane spans lie at 9–29 (ASGALAPWLGISLIVILFDQL), 45–65 (ALTSFFSLVLVYNRGAAFGFL), 71–91 (WQRWAFTALGIGATLVICFLL), and 100–120 (FSLSLALILGGALGNVIDRLV). Residues aspartate 126 and aspartate 144 contribute to the active site. A helical membrane pass occupies residues 135-155 (WHFPAFNLADSAITVGAVLLV).

It belongs to the peptidase A8 family.

Its subcellular location is the cell inner membrane. The catalysed reaction is Release of signal peptides from bacterial membrane prolipoproteins. Hydrolyzes -Xaa-Yaa-Zaa-|-(S,diacylglyceryl)Cys-, in which Xaa is hydrophobic (preferably Leu), and Yaa (Ala or Ser) and Zaa (Gly or Ala) have small, neutral side chains.. The protein operates within protein modification; lipoprotein biosynthesis (signal peptide cleavage). In terms of biological role, this protein specifically catalyzes the removal of signal peptides from prolipoproteins. In Burkholderia ambifaria (strain MC40-6), this protein is Lipoprotein signal peptidase.